A 116-amino-acid polypeptide reads, in one-letter code: Ly-6/neurotoxin-like protein 1 (116 aa).

The N-terminal stretch at Met-1–Ala-20 is a signal peptide. Positions Leu-21–Ile-107 constitute a UPAR/Ly6 domain. Disulfide bonds link Cys-23–Cys-46, Cys-26–Cys-33, Cys-39–Cys-64, Cys-68–Cys-85, and Cys-86–Cys-91. The GPI-anchor amidated cysteine moiety is linked to residue Cys-91. A propeptide spans Asn-92–Leu-116 (removed in mature form).

Interacts with nAChRs containing alpha-4:beta-2 (CHRNA4:CHRNB2) and alpha-7 (CHRNA7) subunits. Interacts with CHRNA4 probably in the endoplasmic reticulum prior to nAChR pentameric assembly. Interacts with KCNA2/Potassium voltage-gated channel subfamily A member 2.

Its subcellular location is the cell membrane. It is found in the cell projection. The protein resides in the dendrite. It localises to the endoplasmic reticulum. Functionally, acts in different tissues through interaction to nicotinic acetylcholine receptors (nAChRs). The proposed role as modulator of nAChR activity seems to be dependent on the nAChR subtype and stoichiometry, and to involve an effect on nAChR trafficking and its cell surface expression, and on single channel properties of the nAChR inserted in the plasma membrane. Modulates functional properties of nicotinic acetylcholine receptors (nAChRs) to prevent excessive excitation, and hence neurodegeneration. Enhances desensitization by increasing both the rate and extent of desensitization of alpha-4:beta-2-containing nAChRs and slowing recovery from desensitization. Promotes large amplitude ACh-evoked currents through alpha-4:beta-2 nAChRs. Is involved in regulation of the nAChR pentameric assembly in the endoplasmic reticulum. Shifts stoichiometry from high sensitivity alpha-4(2):beta-2(3) to low sensitivity alpha-4(3):beta-2(2) nAChR. In vitro modulates alpha-3:beta-4-containing nAChRs. Reduces cell surface expression of (alpha-3:beta-4)(2):beta-4 and (alpha-3:beta-4)(2):alpha-5 nAChRs suggesting an interaction with nAChR alpha-3(-):(+)beta-4 subunit interfaces and an allosteric mode. Corresponding single channel effects characterized by decreased unitary conductance, altered burst proportions and enhanced desensitization/inactivation seem to depend on nAChR alpha:alpha subunit interfaces and are greater in (alpha-3:beta-2)(2):alpha-3 when compared to (alpha-3:beta-2)(2):alpha-5 nAChRs. Prevents plasticity in the primary visual cortex late in life. In Homo sapiens (Human), this protein is Ly-6/neurotoxin-like protein 1.